Here is a 357-residue protein sequence, read N- to C-terminus: Probable dual-specificity RNA methyltransferase RlmN (357 aa).

Glutamate 95 acts as the Proton acceptor in catalysis. One can recognise a Radical SAM core domain in the interval 106–340 (NRDRHTVCVS…VSVREEKGTD (235 aa)). Cysteine 113 and cysteine 345 are disulfide-bonded. [4Fe-4S] cluster-binding residues include cysteine 120, cysteine 124, and cysteine 127. S-adenosyl-L-methionine is bound by residues 172 to 173 (GE), serine 204, 227 to 229 (SLH), and asparagine 302. Cysteine 345 serves as the catalytic S-methylcysteine intermediate.

It belongs to the radical SAM superfamily. RlmN family. It depends on [4Fe-4S] cluster as a cofactor.

It localises to the cytoplasm. The enzyme catalyses adenosine(2503) in 23S rRNA + 2 reduced [2Fe-2S]-[ferredoxin] + 2 S-adenosyl-L-methionine = 2-methyladenosine(2503) in 23S rRNA + 5'-deoxyadenosine + L-methionine + 2 oxidized [2Fe-2S]-[ferredoxin] + S-adenosyl-L-homocysteine. It carries out the reaction adenosine(37) in tRNA + 2 reduced [2Fe-2S]-[ferredoxin] + 2 S-adenosyl-L-methionine = 2-methyladenosine(37) in tRNA + 5'-deoxyadenosine + L-methionine + 2 oxidized [2Fe-2S]-[ferredoxin] + S-adenosyl-L-homocysteine. Specifically methylates position 2 of adenine 2503 in 23S rRNA and position 2 of adenine 37 in tRNAs. The protein is Probable dual-specificity RNA methyltransferase RlmN of Desulfitobacterium hafniense (strain Y51).